The primary structure comprises 213 residues: FMN-dependent NADH:quinone oxidoreductase 1 (213 aa).

18 to 20 (SVS) serves as a coordination point for FMN.

This sequence belongs to the azoreductase type 1 family. In terms of assembly, homodimer. FMN is required as a cofactor.

The catalysed reaction is 2 a quinone + NADH + H(+) = 2 a 1,4-benzosemiquinone + NAD(+). The enzyme catalyses N,N-dimethyl-1,4-phenylenediamine + anthranilate + 2 NAD(+) = 2-(4-dimethylaminophenyl)diazenylbenzoate + 2 NADH + 2 H(+). Its function is as follows. Quinone reductase that provides resistance to thiol-specific stress caused by electrophilic quinones. In terms of biological role, also exhibits azoreductase activity. Catalyzes the reductive cleavage of the azo bond in aromatic azo compounds to the corresponding amines. This is FMN-dependent NADH:quinone oxidoreductase 1 from Bacillus cereus (strain ZK / E33L).